Consider the following 195-residue polypeptide: Probable septum site-determining protein MinC (195 aa).

This sequence belongs to the MinC family. In terms of assembly, interacts with MinD and FtsZ.

Cell division inhibitor that blocks the formation of polar Z ring septums. Rapidly oscillates between the poles of the cell to destabilize FtsZ filaments that have formed before they mature into polar Z rings. Prevents FtsZ polymerization. This is Probable septum site-determining protein MinC from Helicobacter pylori (strain G27).